The sequence spans 487 residues: Acetyl-coenzyme A carboxylase carboxyl transferase subunit beta, chloroplastic (487 aa).

The region spanning 223-487 (LWIQCDNCYG…FFPLKKNEIK (265 aa)) is the CoA carboxyltransferase N-terminal domain. Zn(2+)-binding residues include C227, C230, C243, and C246. The C4-type zinc finger occupies 227-246 (CDNCYGLMYKKVKMNVCEQC).

Belongs to the AccD/PCCB family. In terms of assembly, acetyl-CoA carboxylase is a heterohexamer composed of biotin carboxyl carrier protein, biotin carboxylase and 2 subunits each of ACCase subunit alpha and ACCase plastid-coded subunit beta (accD). Zn(2+) serves as cofactor.

The protein localises to the plastid. The protein resides in the chloroplast stroma. The catalysed reaction is N(6)-carboxybiotinyl-L-lysyl-[protein] + acetyl-CoA = N(6)-biotinyl-L-lysyl-[protein] + malonyl-CoA. The protein operates within lipid metabolism; malonyl-CoA biosynthesis; malonyl-CoA from acetyl-CoA: step 1/1. In terms of biological role, component of the acetyl coenzyme A carboxylase (ACC) complex. Biotin carboxylase (BC) catalyzes the carboxylation of biotin on its carrier protein (BCCP) and then the CO(2) group is transferred by the transcarboxylase to acetyl-CoA to form malonyl-CoA. The protein is Acetyl-coenzyme A carboxylase carboxyl transferase subunit beta, chloroplastic of Lepidium virginicum (Virginia pepperweed).